The chain runs to 528 residues: Phosphoenolpyruvate carboxykinase (ATP) (528 aa).

Substrate is bound by residues R56, Y192, and K198. Residues K198, H217, and 233 to 241 (GLSGTGKTT) contribute to the ATP site. Mn(2+) is bound by residues K198 and H217. D254 contacts Mn(2+). Positions 282, 319, and 444 each coordinate ATP. R319 is a substrate binding site.

It belongs to the phosphoenolpyruvate carboxykinase (ATP) family. Mn(2+) serves as cofactor.

The protein resides in the cytoplasm. It catalyses the reaction oxaloacetate + ATP = phosphoenolpyruvate + ADP + CO2. It functions in the pathway carbohydrate biosynthesis; gluconeogenesis. Involved in the gluconeogenesis. Catalyzes the conversion of oxaloacetate (OAA) to phosphoenolpyruvate (PEP) through direct phosphoryl transfer between the nucleoside triphosphate and OAA. The polypeptide is Phosphoenolpyruvate carboxykinase (ATP) (Geobacillus kaustophilus (strain HTA426)).